Consider the following 265-residue polypeptide: Mlc titration factor A (265 aa).

Zn(2+) contacts are provided by His-111, His-148, His-152, and Glu-211.

This sequence belongs to the MtfA family. Interacts with Mlc. It depends on Zn(2+) as a cofactor.

The protein resides in the cytoplasm. Functionally, involved in the modulation of the activity of the glucose-phosphotransferase system (glucose-PTS). Interacts with the transcriptional repressor Mlc, preventing its interaction with DNA and leading to the modulation of expression of genes regulated by Mlc, including ptsG, which encodes the PTS system glucose-specific EIICB component. Its function is as follows. Shows zinc-dependent metallopeptidase activity. The chain is Mlc titration factor A from Escherichia coli O8 (strain IAI1).